Consider the following 303-residue polypeptide: MTHMSIFLSRDNKVIVQGITGSEATVHTARMLRAGTQIVGGVNARKAGTTVTHEDKGGRLIKLPVFGSVAEAMEKTGADVSIIFVPPTFAKDAIIEAIDAEIPLLVVITEGIPVQDTAYAWAYNLEAGHKTRIIGPNCPGIISPGQSLAGITPANITGPGPIGLVSKSGTLTYQMMFELRDLGFSTAIGIGGDPVIGTTHIDAIEAFEKDPDTKLIVMIGEIGGDAEERAADFIKTNVSKPVVGYVAGFTAPEGKTMGHAGAIVSGSSGTAAAKQEALEAAGVKVGKTPSATAALAREILLSL.

CoA is bound by residues Thr-20–Glu-23, Lys-46, and Ile-108–Glu-110. Position 173 (Tyr-173) interacts with substrate. Residue His-259 is the Tele-phosphohistidine intermediate of the active site.

The protein belongs to the succinate/malate CoA ligase alpha subunit family. As to quaternary structure, heterotetramer of two alpha and two beta subunits.

It carries out the reaction succinate + ATP + CoA = succinyl-CoA + ADP + phosphate. The catalysed reaction is GTP + succinate + CoA = succinyl-CoA + GDP + phosphate. It participates in carbohydrate metabolism; tricarboxylic acid cycle; succinate from succinyl-CoA (ligase route): step 1/1. Succinyl-CoA synthetase functions in the citric acid cycle (TCA), coupling the hydrolysis of succinyl-CoA to the synthesis of either ATP or GTP and thus represents the only step of substrate-level phosphorylation in the TCA. The alpha subunit of the enzyme binds the substrates coenzyme A and phosphate, while succinate binding and nucleotide specificity is provided by the beta subunit. In Mycobacterium bovis (strain ATCC BAA-935 / AF2122/97), this protein is Succinate--CoA ligase [ADP-forming] subunit alpha.